A 388-amino-acid chain; its full sequence is Chorismate synthase (388 aa).

NADP(+) contacts are provided by Arg39 and Arg45. A disordered region spans residues 95–118; it reads EKNEKSRRVSRPRPGHADLVGGMK. Residues 130–132, 251–252, Gly296, 311–315, and Arg337 contribute to the FMN site; these read RSS, NA, and KPIPT.

It belongs to the chorismate synthase family. In terms of assembly, homotetramer. FMNH2 serves as cofactor.

It carries out the reaction 5-O-(1-carboxyvinyl)-3-phosphoshikimate = chorismate + phosphate. It participates in metabolic intermediate biosynthesis; chorismate biosynthesis; chorismate from D-erythrose 4-phosphate and phosphoenolpyruvate: step 7/7. Catalyzes the anti-1,4-elimination of the C-3 phosphate and the C-6 proR hydrogen from 5-enolpyruvylshikimate-3-phosphate (EPSP) to yield chorismate, which is the branch point compound that serves as the starting substrate for the three terminal pathways of aromatic amino acid biosynthesis. This reaction introduces a second double bond into the aromatic ring system. In Listeria monocytogenes serotype 4b (strain F2365), this protein is Chorismate synthase.